Here is a 1604-residue protein sequence, read N- to C-terminus: MVDAGGRSAAEGWRRMEAPPEGADLVPLDRYDAARAKIAANLQWICAKAYGLDNIPEDLRDPFYIDQYEQEHIKPPVIKLLLSSELYCRVCSLILKGDQAATLQGHQSVIQALSRKGIYVMESDDTPVTDADLSQAPIKMSGHMAMVDALMMAYTVEMISIEKVVASVKRFSTFSASKELPYDLEDAMVFWINKVNLKMREITEKEVKLKQQPLESPAHQKPGLEHAVMHCMLEPVDFARVVRYRREHLSARQSPYFPLLEDLMRDGSDGAALLAVVHYYCPEQMKLDDICLKEVPSMADSLYNIRLLREFSNEHLNKCFYLTLEDMLYAPLVLKPNVMVFIAELFWWFENVKPDFVQPRDIQELKDAKTVLQQKSSRPPVPISNATKRSFLGSPAAMSPADLPPSTQPLTEGSHRYHLHSEEPECLGKGASTFSPSHPLLPLRQKQQKVSQAEEIPDQRHRSNSLTRADGQPRGAAIAWPDKKNRPVSQPTSFALHHAASCDVDPSSGDSISLARSISKDSLASNIIHLTPQNQPHPSAGKTNGKSLLSNVNIEDDEEEELVAIIRTDVSPHSPEIPRTSPQAPGLVASIRSPQRQADTLESKPDSFYLEPLMPAVLRPAKEKQIITKEDERGEGRPRTIMAKRPSEGSQPLVRKKVTGSHGSRDLNRTFTPIPCSEFAASIDPTEVGPQSTEATGEGQPLALGRFDPVPQGQVADGFFLHVGRAEEDEGRWYVGSQSPSSHDSEPWTILRQDSDSDVVDVEDAEQDFIGEDHPVVIPRYAGEEESAKLQEDMKVKEHEDKDDASGRSSPCLSTTSQLSSMSMASGSVKMTSFAERKLQRLNSCETKSSTSSSQKTTPDASESCPAPLTTWRQKREQSPSRHSKDPASLLASELVQLHMQLEEKRRAIEAQKKKMEALSARQRLKLGKAAFLHVVKKGKADGAPQPLRPEHFTKEFTQHNGEDLDDGTCKTEGFLVKEEQRDLSDSQDVAFVQLHKPRDPATLHDGEKHRVISAALLEDSVGEVDVNECDLSIEKLNETISTLQQAILKISQQQEQLLMKSPTVPTSGTKNNCQDQKVKAPVHFVEPLSPTGVPGHRKPPRLGQGRNSRSGRPAELKVPKDRQQGCSRSKTPTPSVETLPHSRSLPPSTHPRSPLDPGGELPEKCLFDSYRLHDESNHRTFGLSSCKDANIVSEQMNFKEGLDTSVQEAELSSSAITGKEHTPMEEPLRSKASLIEVDLSDLKAPDEDGEVVGHESSLELGGESDQKPGVGFFFKDEQKAEDELAKKRAAFLLKQQRKAEEARARKQQLEAEVELKRDEARRKAEEDRLRKEEEKARRELIKQEYLRRKQQQALEEQGLGKPKSKPKKPRPKSVHREESCSDSGTKCSSTPDNLSQTHSGSSLSLASAATTEPESVHSGGTPSHRVESLEALPILSRNPSRSTDRDWETASAASSLASVAEYTGPKLFKEPSSKSNKPIIHNAISHCCLAGKVNEPHKNSILEELEKCDANHYIILFRDAGCQFRALYCYQPDTEEIYKLTGTGPKSITKKMIDKLYKYSSDRKQFNLIPAKTMSVSVDALTIHNHLWQPKRPTVPKKTQTRK.

The residue at position 216 (serine 216) is a Phosphoserine. The Calponin-homology (CH) domain occupies 235–350 (PVDFARVVRY…FIAELFWWFE (116 aa)). Phosphoserine occurs at positions 390, 394, and 435. Residues 394 to 413 (SPAAMSPADLPPSTQPLTEG) are disordered. A disordered region spans residues 444–491 (RQKQQKVSQAEEIPDQRHRSNSLTRADGQPRGAAIAWPDKKNRPVSQP). Threonine 531 is subject to Phosphothreonine. Residues serine 571, serine 574, serine 581, serine 593, serine 607, serine 647, serine 739, serine 745, serine 755, and serine 757 each carry the phosphoserine modification. Residues 642 to 671 (MAKRPSEGSQPLVRKKVTGSHGSRDLNRTF) are disordered. A compositionally biased stretch (basic and acidic residues) spans 784–806 (EEESAKLQEDMKVKEHEDKDDAS). 2 disordered regions span residues 784–824 (EEES…SMSM) and 842–888 (LNSC…KDPA). Composition is skewed to low complexity over residues 813-824 (LSTTSQLSSMSM) and 847-858 (TKSSTSSSQKTT). Basic and acidic residues predominate over residues 874–886 (QKREQSPSRHSKD). The sufficient for interaction with SPTBN1 stretch occupies residues 888-909 (ASLLASELVQLHMQLEEKRRAI). Coiled coils occupy residues 890–926 (LLAS…QRLK) and 1026–1058 (DVNE…QEQL). The sufficient for interaction with calmodulin stretch occupies residues 920 to 939 (SARQRLKLGKAAFLHVVKKG). Disordered regions lie at residues 1085 to 1163 (FVEP…GELP), 1246 to 1271 (PDED…KPGV), and 1298 to 1448 (RKAE…DRDW). Phosphoserine is present on serine 1090. Residues 1113–1124 (RPAELKVPKDRQ) show a composition bias toward basic and acidic residues. The span at 1125-1137 (QGCSRSKTPTPSV) shows a compositional bias: polar residues. At serine 1154 the chain carries Phosphoserine. Composition is skewed to basic and acidic residues over residues 1246-1258 (PDED…HESS) and 1298-1348 (RKAE…EYLR). The stretch at 1286–1357 (AKKRAAFLLK…RRKQQQALEE (72 aa)) forms a coiled coil. A compositionally biased stretch (basic residues) spans 1363-1374 (PKSKPKKPRPKS). Residues 1382–1394 (SDSGTKCSSTPDN) show a composition bias toward polar residues. The segment covering 1395 to 1412 (LSQTHSGSSLSLASAATT) has biased composition (low complexity). Phosphoserine is present on residues serine 1400 and serine 1429. The region spanning 1465–1599 (GPKLFKEPSS…QPKRPTVPKK (135 aa)) is the CKK domain. Tyrosine 1539 carries the phosphotyrosine modification.

Belongs to the CAMSAP1 family. Interacts with spectrin via SPTBN1; the interaction is direct. Interacts with calmodulin; calcium-dependent it prevents interaction with spectrin. In brain, specifically expressed in astrocytes (at protein level).

It is found in the cytoplasm. It localises to the cytoskeleton. Key microtubule-organizing protein that specifically binds the minus-end of non-centrosomal microtubules and regulates their dynamics and organization. Specifically recognizes growing microtubule minus-ends and stabilizes microtubules. Acts on free microtubule minus-ends that are not capped by microtubule-nucleating proteins or other factors and protects microtubule minus-ends from depolymerization. In contrast to CAMSAP2 and CAMSAP3, tracks along the growing tips of minus-end microtubules without significantly affecting the polymerization rate: binds at the very tip of the microtubules minus-end and acts as a minus-end tracking protein (-TIP) that dissociates from microtubules after allowing tubulin incorporation. Through interaction with spectrin may regulate neurite outgrowth. The protein is Calmodulin-regulated spectrin-associated protein 1 (Camsap1) of Rattus norvegicus (Rat).